We begin with the raw amino-acid sequence, 270 residues long: Formamidopyrimidine-DNA glycosylase (270 aa).

Pro2 serves as the catalytic Schiff-base intermediate with DNA. Residue Glu3 is the Proton donor of the active site. Lys58 acts as the Proton donor; for beta-elimination activity in catalysis. DNA contacts are provided by His91, Arg110, and Lys151. The FPG-type zinc-finger motif lies at 236–270 (FVYGRGGEACKVCGTELRNVVLGQRASVFCPRCQR). Arg260 serves as the catalytic Proton donor; for delta-elimination activity.

The protein belongs to the FPG family. As to quaternary structure, monomer. Requires Zn(2+) as cofactor.

The catalysed reaction is Hydrolysis of DNA containing ring-opened 7-methylguanine residues, releasing 2,6-diamino-4-hydroxy-5-(N-methyl)formamidopyrimidine.. It carries out the reaction 2'-deoxyribonucleotide-(2'-deoxyribose 5'-phosphate)-2'-deoxyribonucleotide-DNA = a 3'-end 2'-deoxyribonucleotide-(2,3-dehydro-2,3-deoxyribose 5'-phosphate)-DNA + a 5'-end 5'-phospho-2'-deoxyribonucleoside-DNA + H(+). Its function is as follows. Involved in base excision repair of DNA damaged by oxidation or by mutagenic agents. Acts as a DNA glycosylase that recognizes and removes damaged bases. Has a preference for oxidized purines, such as 7,8-dihydro-8-oxoguanine (8-oxoG). Has AP (apurinic/apyrimidinic) lyase activity and introduces nicks in the DNA strand. Cleaves the DNA backbone by beta-delta elimination to generate a single-strand break at the site of the removed base with both 3'- and 5'-phosphates. The chain is Formamidopyrimidine-DNA glycosylase from Pseudomonas fluorescens (strain SBW25).